The chain runs to 182 residues: Isopentenyl-diphosphate Delta-isomerase (182 aa).

Residues His25 and His32 each coordinate Mn(2+). The Nudix hydrolase domain occupies 30–164; that stretch reads LLHLAFSSWL…PWAFSPWMVM (135 aa). Residue Cys67 is part of the active site. His69 contacts Mn(2+). Glu87 serves as a coordination point for Mg(2+). 2 residues coordinate Mn(2+): Glu114 and Glu116. Glu116 is a catalytic residue.

The protein belongs to the IPP isomerase type 1 family. In terms of assembly, homodimer. Mg(2+) serves as cofactor. The cofactor is Mn(2+).

It is found in the cytoplasm. It carries out the reaction isopentenyl diphosphate = dimethylallyl diphosphate. It functions in the pathway isoprenoid biosynthesis; dimethylallyl diphosphate biosynthesis; dimethylallyl diphosphate from isopentenyl diphosphate: step 1/1. Functionally, catalyzes the 1,3-allylic rearrangement of the homoallylic substrate isopentenyl (IPP) to its highly electrophilic allylic isomer, dimethylallyl diphosphate (DMAPP). This chain is Isopentenyl-diphosphate Delta-isomerase, found in Escherichia coli (strain SMS-3-5 / SECEC).